A 182-amino-acid chain; its full sequence is Ribosome-recycling factor (182 aa).

Residues 136-160 (VKKSEKDGDLSEDQSRDEQEKIQKE) form a disordered region.

This sequence belongs to the RRF family.

Its subcellular location is the cytoplasm. In terms of biological role, responsible for the release of ribosomes from messenger RNA at the termination of protein biosynthesis. May increase the efficiency of translation by recycling ribosomes from one round of translation to another. This chain is Ribosome-recycling factor, found in Prochlorococcus marinus (strain NATL1A).